Reading from the N-terminus, the 399-residue chain is S-adenosylmethionine synthase (399 aa).

H17 serves as a coordination point for ATP. Position 19 (D19) interacts with Mg(2+). E45 is a binding site for K(+). L-methionine-binding residues include E58 and Q101. Positions 101–111 (QSADIAMGVDQ) are flexible loop. Residues 177-179 (DGK), 244-245 (RF), D253, 259-260 (RK), A276, and K280 each bind ATP. D253 is a binding site for L-methionine. An L-methionine-binding site is contributed by K284.

This sequence belongs to the AdoMet synthase family. In terms of assembly, homotetramer; dimer of dimers. Mg(2+) serves as cofactor. Requires K(+) as cofactor.

Its subcellular location is the cytoplasm. The enzyme catalyses L-methionine + ATP + H2O = S-adenosyl-L-methionine + phosphate + diphosphate. It functions in the pathway amino-acid biosynthesis; S-adenosyl-L-methionine biosynthesis; S-adenosyl-L-methionine from L-methionine: step 1/1. In terms of biological role, catalyzes the formation of S-adenosylmethionine (AdoMet) from methionine and ATP. The overall synthetic reaction is composed of two sequential steps, AdoMet formation and the subsequent tripolyphosphate hydrolysis which occurs prior to release of AdoMet from the enzyme. This is S-adenosylmethionine synthase from Bacillus cereus (strain G9842).